A 607-amino-acid chain; its full sequence is Zinc finger CCCH domain-containing protein 66 (607 aa).

ANK repeat units lie at residues 57 to 87 and 92 to 124; these read EERTPLMIAALFGSKEVVDYIISTGLVDVNR and DGATALHCAVSGLSANSLEIVTLLLKGSANPDS. Over residues 161–178 the composition is skewed to acidic residues; that stretch reads LNEVNGQEESEPEVEVEV. The segment at 161–193 is disordered; sequence LNEVNGQEESEPEVEVEVEVSPPRGSERKEYPV. C3H1-type zinc fingers lie at residues 254-276 and 284-308; these read PCPEFRKGSCSRGDTCEYAHGIF and QYRTRLCKDETNCSRRVCFFAHKPE. Residues 342–363 are disordered; that stretch reads ISPLPIGATTTPPLSPNGVSSP. Over residues 349–361 the composition is skewed to polar residues; it reads ATTTPPLSPNGVS.

This Arabidopsis thaliana (Mouse-ear cress) protein is Zinc finger CCCH domain-containing protein 66.